The chain runs to 958 residues: Glycine dehydrogenase (decarboxylating) (958 aa).

Lys-708 bears the N6-(pyridoxal phosphate)lysine mark.

It belongs to the GcvP family. As to quaternary structure, the glycine cleavage system is composed of four proteins: P, T, L and H. Pyridoxal 5'-phosphate serves as cofactor.

It carries out the reaction N(6)-[(R)-lipoyl]-L-lysyl-[glycine-cleavage complex H protein] + glycine + H(+) = N(6)-[(R)-S(8)-aminomethyldihydrolipoyl]-L-lysyl-[glycine-cleavage complex H protein] + CO2. In terms of biological role, the glycine cleavage system catalyzes the degradation of glycine. The P protein binds the alpha-amino group of glycine through its pyridoxal phosphate cofactor; CO(2) is released and the remaining methylamine moiety is then transferred to the lipoamide cofactor of the H protein. This is Glycine dehydrogenase (decarboxylating) from Proteus mirabilis (strain HI4320).